Here is a 477-residue protein sequence, read N- to C-terminus: Aspartyl/glutamyl-tRNA(Asn/Gln) amidotransferase subunit B (477 aa).

This sequence belongs to the GatB/GatE family. GatB subfamily. Heterotrimer of A, B and C subunits.

It carries out the reaction L-glutamyl-tRNA(Gln) + L-glutamine + ATP + H2O = L-glutaminyl-tRNA(Gln) + L-glutamate + ADP + phosphate + H(+). The catalysed reaction is L-aspartyl-tRNA(Asn) + L-glutamine + ATP + H2O = L-asparaginyl-tRNA(Asn) + L-glutamate + ADP + phosphate + 2 H(+). Its function is as follows. Allows the formation of correctly charged Asn-tRNA(Asn) or Gln-tRNA(Gln) through the transamidation of misacylated Asp-tRNA(Asn) or Glu-tRNA(Gln) in organisms which lack either or both of asparaginyl-tRNA or glutaminyl-tRNA synthetases. The reaction takes place in the presence of glutamine and ATP through an activated phospho-Asp-tRNA(Asn) or phospho-Glu-tRNA(Gln). The sequence is that of Aspartyl/glutamyl-tRNA(Asn/Gln) amidotransferase subunit B from Lawsonia intracellularis (strain PHE/MN1-00).